We begin with the raw amino-acid sequence, 20 residues long: 7.2 kDa cytotoxin RVV-7 (20 aa).

As to quaternary structure, monomer. Homodimerizes during storage at 30 degrees Celsius (observed after 3 days). As to expression, expressed by the venom gland.

The protein localises to the secreted. Its subcellular location is the target cell membrane. In terms of biological role, this three-finger cytotoxin shows cytotoxicity and direct nephrotoxicity. The cytotoxicity has been observed on B16F10 melanoma cells (EC(50)=2.56 uM) and on kidney proximal tubular epithelium LLCPK1 cells (EC(50)=4.79 uM); it is due to necrotic cell death and not to apoptosis. Direct nephrotoxicity has been deduced from binding to LLCPK1 cell line and to kidney membranes. In addition, after intravenous injection into mice tail vein, the toxin principally accumulates in kidney, but only minimally in blood, liver and brain. In Daboia russelii (Russel's viper), this protein is 7.2 kDa cytotoxin RVV-7.